A 368-amino-acid chain; its full sequence is Alanine racemase (368 aa).

Lys40 (proton acceptor; specific for D-alanine) is an active-site residue. Lys40 bears the N6-(pyridoxal phosphate)lysine mark. Arg134 provides a ligand contact to substrate. Tyr263 functions as the Proton acceptor; specific for L-alanine in the catalytic mechanism. Met310 is a binding site for substrate.

The protein belongs to the alanine racemase family. Requires pyridoxal 5'-phosphate as cofactor.

It catalyses the reaction L-alanine = D-alanine. The protein operates within amino-acid biosynthesis; D-alanine biosynthesis; D-alanine from L-alanine: step 1/1. Its function is as follows. Catalyzes the interconversion of L-alanine and D-alanine. May also act on other amino acids. The polypeptide is Alanine racemase (alr) (Listeria monocytogenes serotype 1/2a (strain 10403S)).